Consider the following 208-residue polypeptide: MIRRLLGVALLTGAITGCTTIQLEPLPEGMTNQPPADWAERSDHLSRFDQWQLRGKLAVKQPSDSGTAIINGWRQQGERYDLSLSSSFLGMGTTRLTGVPGFIELTLANGETYQSSDPETLVAAATGWNLPIDNLAWWVRGLPAPEGDFRLLFDEQHQLAILRQDGWEIRYDRWQPFIDSLPALPARITALNGDKRVRVVISEWQQED.

The signal sequence occupies residues 1–17 (MIRRLLGVALLTGAITG). Residue Cys18 is the site of N-palmitoyl cysteine attachment. The S-diacylglycerol cysteine moiety is linked to residue Cys18.

This sequence belongs to the LolB family. Monomer.

Its subcellular location is the cell outer membrane. In terms of biological role, plays a critical role in the incorporation of lipoproteins in the outer membrane after they are released by the LolA protein. This chain is Outer-membrane lipoprotein LolB, found in Marinobacter nauticus (strain ATCC 700491 / DSM 11845 / VT8) (Marinobacter aquaeolei).